The following is a 347-amino-acid chain: tRNA N6-adenosine threonylcarbamoyltransferase (347 aa).

The Fe cation site is built by H111 and H115. Substrate contacts are provided by residues 133–137 (LASGG), D166, G179, and N278. D306 is a Fe cation binding site.

This sequence belongs to the KAE1 / TsaD family. It depends on Fe(2+) as a cofactor.

It localises to the cytoplasm. It catalyses the reaction L-threonylcarbamoyladenylate + adenosine(37) in tRNA = N(6)-L-threonylcarbamoyladenosine(37) in tRNA + AMP + H(+). Its function is as follows. Required for the formation of a threonylcarbamoyl group on adenosine at position 37 (t(6)A37) in tRNAs that read codons beginning with adenine. Is involved in the transfer of the threonylcarbamoyl moiety of threonylcarbamoyl-AMP (TC-AMP) to the N6 group of A37, together with TsaE and TsaB. TsaD likely plays a direct catalytic role in this reaction. In Paramagnetospirillum magneticum (strain ATCC 700264 / AMB-1) (Magnetospirillum magneticum), this protein is tRNA N6-adenosine threonylcarbamoyltransferase.